The sequence spans 350 residues: Transmembrane protein 185A (350 aa).

The next 7 membrane-spanning stretches (helical) occupy residues 16–36 (LIYACLLLFSVLLALRLDGII), 41–61 (WAVFAPIWLWKLMVIVGASVG), 81–101 (FKAMLIAVGIHLLLLMFEVLV), 111–131 (FWLLVFMPLFFVSPVSVAACV), 177–197 (ILMSFLCLVVLYYIVWSVLFL), 211–231 (ITMALSWMTIVVPLLTFEILL), and 240–260 (AFSCIPIFVPLWLSLITLMAT). Residues 298–350 (DLHHEDSEETEETPVPEPPKIAPMFRKKARVVITQSPGKYVLPPPKLNIEMPD) form a mediates interaction with MAP1B region.

This sequence belongs to the TMEM185 family. Interacts with MAP1B. Broadly expressed in brain where it is specifically expressed by neurons (at protein level). Also detected in some cells of arterioles, intestine, lung and testis (at protein level).

The protein localises to the cell projection. Its subcellular location is the dendrite. The protein resides in the membrane. The sequence is that of Transmembrane protein 185A (Tmem185a) from Mus musculus (Mouse).